The primary structure comprises 159 residues: Phosphopantetheine adenylyltransferase (159 aa).

Residue T10 participates in substrate binding. Residues T10 to F11 and H18 contribute to the ATP site. Substrate contacts are provided by K42, M74, and R88. ATP contacts are provided by residues G89–R91, E99, and W124–S130.

The protein belongs to the bacterial CoaD family. As to quaternary structure, homohexamer. Requires Mg(2+) as cofactor.

The protein localises to the cytoplasm. The catalysed reaction is (R)-4'-phosphopantetheine + ATP + H(+) = 3'-dephospho-CoA + diphosphate. It functions in the pathway cofactor biosynthesis; coenzyme A biosynthesis; CoA from (R)-pantothenate: step 4/5. Reversibly transfers an adenylyl group from ATP to 4'-phosphopantetheine, yielding dephospho-CoA (dPCoA) and pyrophosphate. The polypeptide is Phosphopantetheine adenylyltransferase (Yersinia pseudotuberculosis serotype O:3 (strain YPIII)).